A 1067-amino-acid chain; its full sequence is Kinesin-like protein KIF11 (1067 aa).

Residues 18–359 (NIQVVVRCRP…LEYANRAKNI (342 aa)) form the Kinesin motor domain. 105-112 (GQTGTGKT) lines the ATP pocket. Residues 365–480 (VNQKLTKRAL…SKEQLAQEAF (116 aa)) are a coiled coil. At T937 the chain carries Phosphothreonine; by CDK1. A Phosphoserine; by NEK6 modification is found at S1046. A disordered region spans residues 1048-1067 (IMDEAEQSLPKSKLPLRMQN).

It belongs to the TRAFAC class myosin-kinesin ATPase superfamily. Kinesin family. BimC subfamily. Heterotetramer of two heavy and two light chains. Interacts with aurka. In terms of processing, phosphorylation of Thr-937 during mitosis controls the association of this protein with the spindle apparatus. Post-translationally, a subset of this protein primarily localized at the spindle pole is phosphorylated by NEK6 during mitosis. Phosphorylated on a serine residue by aurka.

The protein resides in the cytoplasm. It localises to the cytoskeleton. It is found in the spindle pole. Functionally, plus end-directed motor protein required for establishing a bipolar spindle. Associates with both interphase and mitotic spindle microtubules. May be involved in nuclear divisions taking place during the development of unfertilized eggs. Required in non-mitotic cells for transport of secretory proteins from the Golgi complex to the cell surface. The chain is Kinesin-like protein KIF11 from Xenopus tropicalis (Western clawed frog).